We begin with the raw amino-acid sequence, 95 residues long: Ragulator complex protein LAMTOR4 homolog (95 aa).

This sequence belongs to the LAMTOR4 family. In terms of assembly, part of the Ragulator complex.

Its subcellular location is the lysosome. Functionally, regulator of the TOR pathway, a signaling cascade that promotes cell growth in response to growth factors, energy levels, and amino acids. As part of the Ragulator complex, may activate the TOR signaling cascade in response to amino acids. The protein is Ragulator complex protein LAMTOR4 homolog of Nematostella vectensis (Starlet sea anemone).